A 227-amino-acid polypeptide reads, in one-letter code: Leucyl/phenylalanyl-tRNA--protein transferase (227 aa).

Belongs to the L/F-transferase family.

It localises to the cytoplasm. The catalysed reaction is N-terminal L-lysyl-[protein] + L-leucyl-tRNA(Leu) = N-terminal L-leucyl-L-lysyl-[protein] + tRNA(Leu) + H(+). The enzyme catalyses N-terminal L-arginyl-[protein] + L-leucyl-tRNA(Leu) = N-terminal L-leucyl-L-arginyl-[protein] + tRNA(Leu) + H(+). It catalyses the reaction L-phenylalanyl-tRNA(Phe) + an N-terminal L-alpha-aminoacyl-[protein] = an N-terminal L-phenylalanyl-L-alpha-aminoacyl-[protein] + tRNA(Phe). In terms of biological role, functions in the N-end rule pathway of protein degradation where it conjugates Leu, Phe and, less efficiently, Met from aminoacyl-tRNAs to the N-termini of proteins containing an N-terminal arginine or lysine. This Desulfotalea psychrophila (strain LSv54 / DSM 12343) protein is Leucyl/phenylalanyl-tRNA--protein transferase.